The following is a 48-amino-acid chain: Osteocalcin (48 aa).

Residues 1-44 form the Gla domain; it reads AGTAPADLTVAQLESLKEVCEANLACEHMMDVSGIIAAYTAYYG. Residues E14, E18, E21, and E27 each contribute to the Ca(2+) site. Residues E14, E18, and E21 each carry the 4-carboxyglutamate modification. An intrachain disulfide couples C20 to C26.

It belongs to the osteocalcin/matrix Gla protein family. In terms of processing, gamma-carboxyglutamate residues are formed by vitamin K dependent carboxylation by GGCX. These residues are essential for the binding of calcium.

It localises to the secreted. It is found in the extracellular space. Its subcellular location is the extracellular matrix. Functionally, the carboxylated form is one of the main organic components of the bone matrix, which constitutes 1-2% of the total bone protein. The carboxylated form binds strongly to apatite and calcium. In Cyprinus carpio (Common carp), this protein is Osteocalcin (bglap).